Here is a 770-residue protein sequence, read N- to C-terminus: Transducin-like enhancer protein 1 (770 aa).

Residues 1–131 (MFPQSRHPTP…IIGQQQLQAQ (131 aa)) are q domain. Disordered regions lie at residues 128-157 (LQAQ…GIPP) and 176-346 (HLAI…PAME). The tract at residues 132 to 199 (HLSHGHGPPV…RHRDRESGTS (68 aa)) is GP domain. A compositionally biased stretch (low complexity) spans 146–157 (HPSGLQPPGIPP). 2 stretches are compositionally biased toward basic and acidic residues: residues 178–196 (AIKD…DRES) and 209–244 (RSTD…KSDD). The tract at residues 200 to 266 (NSLLVPDSLR…SPHASPTHSP (67 aa)) is ccN domain. The short motif at 225–228 (KKRK) is the Nuclear localization signal element. The residue at position 237 (Ser-237) is a Phosphoserine; by CK2. The segment covering 255-264 (PSSPHASPTH) has biased composition (low complexity). Ser-257, Ser-261, and Ser-265 each carry phosphoserine; by CDK1. A compositionally biased stretch (basic and acidic residues) spans 265–281 (SPRENGIDKNRLLKKDA). The segment at 267–450 (RENGIDKNRL…GGKPAYSFHV (184 aa)) is SP domain. The segment covering 282–297 (SGSPASTASSGSSSSL) has biased composition (low complexity). At Ser-284 the chain carries Phosphoserine. Residues 298 to 308 (KSKEVSLHEKA) are compositionally biased toward basic and acidic residues. WD repeat units lie at residues 470 to 501 (GIPR…HVYT), 528 to 558 (NRDN…SIWD), 572 to 602 (SSAP…AVWD), 614 to 644 (GHTD…RSWD), 696 to 726 (LHES…NAWR), and 737 to 767 (KESS…TVYE).

This sequence belongs to the WD repeat Groucho/TLE family. As to quaternary structure, homooligomer and heterooligomer with other family members. Binds RUNX1, RUNX3, FOXA2, KDM6A, UTY, histone H3, HESX1, ESRRG and the NF-kappa-B subunit RELA. Interacts with HES1 (via WRPW motif). Binds TCF7, LEF1, TCF7L1 and TCF7L2. Interacts with SIX3. Interacts with EFNB1. Interacts with TLE4. Interacts with FOXG1/BF-1; the interaction is inhibited by TLE6/GRG6. Phosphorylated, probably by CDK1. The degree of phosphorylation varies throughout the cell cycle, and is highest at the G2/M transition. Becomes hyperphosphorylated in response to cell differentiation and interaction with HES1 or RUNX1. Post-translationally, ubiquitinated by XIAP/BIRC4. In terms of tissue distribution, highly expressed in liver and lung. Detected at slightly lower levels in heart, brain, kidney and testis. Detected in fetal and adult stomach and small intestine, in adult ileum, duodenum and colon. Expressed in bone marrow-derived macrophages. As to expression, most abundant at the base of the crypts of Lieberkuhn in the small intestine.

The protein localises to the nucleus. It localises to the cytoplasm. In terms of biological role, transcriptional corepressor that binds to a number of transcription factors. Inhibits NF-kappa-B-regulated gene expression. Inhibits the transcriptional activation mediated by FOXA2, and by CTNNB1 and TCF family members in Wnt signaling. Enhances FOXG1/BF-1- and HES1-mediated transcriptional repression. The effects of full-length TLE family members may be modulated by association with dominant-negative AES. Unusual function as coactivator for ESRRG. The polypeptide is Transducin-like enhancer protein 1 (Tle1) (Mus musculus (Mouse)).